The following is a 255-amino-acid chain: Ribonuclease HII (255 aa).

Positions 72-255 constitute an RNase H type-2 domain; it reads RLIAGVDEAG…KTFAPVQSYC (184 aa). 3 residues coordinate a divalent metal cation: aspartate 78, glutamate 79, and aspartate 170.

This sequence belongs to the RNase HII family. Mn(2+) serves as cofactor. The cofactor is Mg(2+).

It is found in the cytoplasm. It catalyses the reaction Endonucleolytic cleavage to 5'-phosphomonoester.. Endonuclease that specifically degrades the RNA of RNA-DNA hybrids. The polypeptide is Ribonuclease HII (Bacillus velezensis (strain DSM 23117 / BGSC 10A6 / LMG 26770 / FZB42) (Bacillus amyloliquefaciens subsp. plantarum)).